Here is a 723-residue protein sequence, read N- to C-terminus: Protein Hook homolog (723 aa).

In terms of domain architecture, Calponin-homology (CH) spans 4–120 (TELCECLVQW…RLLQLILGCA (117 aa)). Coiled coils occupy residues 162–423 (VLPE…MQLQ) and 457–665 (EIKE…IVSA). Positions 682–723 (LANGGPMQGGQSFLARQRQATSRRTTVSTTHPGHARSVNFVN) are disordered. Over residues 696 to 711 (ARQRQATSRRTTVSTT) the composition is skewed to low complexity.

The protein belongs to the hook family. In terms of assembly, interacts with microtubules.

It localises to the cytoplasm. It is found in the cytoskeleton. Its function is as follows. May function to promote vesicle trafficking and/or fusion. May act to link a number of membrane-bound organelles to the cytoskeleton. The sequence is that of Protein Hook homolog from Branchiostoma floridae (Florida lancelet).